Here is a 330-residue protein sequence, read N- to C-terminus: 4-hydroxythreonine-4-phosphate dehydrogenase (330 aa).

The substrate site is built by histidine 136 and threonine 137. Residues histidine 166, histidine 211, and histidine 266 each coordinate a divalent metal cation. Substrate is bound by residues lysine 274, asparagine 283, and arginine 292.

The protein belongs to the PdxA family. As to quaternary structure, homodimer. The cofactor is Zn(2+). Requires Mg(2+) as cofactor. Co(2+) is required as a cofactor.

It localises to the cytoplasm. The catalysed reaction is 4-(phosphooxy)-L-threonine + NAD(+) = 3-amino-2-oxopropyl phosphate + CO2 + NADH. Its pathway is cofactor biosynthesis; pyridoxine 5'-phosphate biosynthesis; pyridoxine 5'-phosphate from D-erythrose 4-phosphate: step 4/5. Catalyzes the NAD(P)-dependent oxidation of 4-(phosphooxy)-L-threonine (HTP) into 2-amino-3-oxo-4-(phosphooxy)butyric acid which spontaneously decarboxylates to form 3-amino-2-oxopropyl phosphate (AHAP). In Serratia proteamaculans (strain 568), this protein is 4-hydroxythreonine-4-phosphate dehydrogenase.